The primary structure comprises 846 residues: DNA mismatch repair protein MutS (846 aa).

594–601 (GPNMSGKS) is an ATP binding site.

This sequence belongs to the DNA mismatch repair MutS family.

Its function is as follows. This protein is involved in the repair of mismatches in DNA. It is possible that it carries out the mismatch recognition step. This protein has a weak ATPase activity. This chain is DNA mismatch repair protein MutS, found in Macrococcus caseolyticus (strain JCSC5402) (Macrococcoides caseolyticum).